The following is a 105-amino-acid chain: Large ribosomal subunit protein uL24 (105 aa).

It belongs to the universal ribosomal protein uL24 family. As to quaternary structure, part of the 50S ribosomal subunit.

In terms of biological role, one of two assembly initiator proteins, it binds directly to the 5'-end of the 23S rRNA, where it nucleates assembly of the 50S subunit. Functionally, one of the proteins that surrounds the polypeptide exit tunnel on the outside of the subunit. This Saccharophagus degradans (strain 2-40 / ATCC 43961 / DSM 17024) protein is Large ribosomal subunit protein uL24.